A 313-amino-acid polypeptide reads, in one-letter code: tRNA dimethylallyltransferase (313 aa).

Position 11-18 (11-18 (GPTAGGKT)) interacts with ATP. 13 to 18 (TAGGKT) contributes to the substrate binding site. 3 interaction with substrate tRNA regions span residues 36 to 39 (DSAL), 160 to 164 (QRIGR), and 243 to 248 (RCVGYR).

This sequence belongs to the IPP transferase family. In terms of assembly, monomer. Requires Mg(2+) as cofactor.

It catalyses the reaction adenosine(37) in tRNA + dimethylallyl diphosphate = N(6)-dimethylallyladenosine(37) in tRNA + diphosphate. In terms of biological role, catalyzes the transfer of a dimethylallyl group onto the adenine at position 37 in tRNAs that read codons beginning with uridine, leading to the formation of N6-(dimethylallyl)adenosine (i(6)A). The polypeptide is tRNA dimethylallyltransferase (Neisseria meningitidis serogroup A / serotype 4A (strain DSM 15465 / Z2491)).